A 131-amino-acid polypeptide reads, in one-letter code: Period circadian protein (131 aa).

A disordered region spans residues 29 to 109 (VTAPVELDPP…NSAGGASGGV (81 aa)). Residues 71-93 (SGNFTTGSNVRMSSVTNTSNAGT) are compositionally biased toward low complexity. Positions 94-109 (GTSGGGNSAGGASGGV) are enriched in gly residues.

In terms of assembly, forms a heterodimer with timeless (TIM); the complex then translocates into the nucleus. Post-translationally, phosphorylated with a circadian rhythmicity, probably by the double-time protein (dbt). Phosphorylation could be implicated in the stability of per monomer and in the formation of heterodimer per-tim.

The protein localises to the nucleus. It is found in the cytoplasm. Its subcellular location is the perinuclear region. Functionally, essential for biological clock functions. Determines the period length of circadian and ultradian rhythms; an increase in PER dosage leads to shortened circadian rhythms and a decrease leads to lengthened circadian rhythms. Essential for the circadian rhythmicity of locomotor activity, eclosion behavior, and for the rhythmic component of the male courtship song that originates in the thoracic nervous system. The biological cycle depends on the rhythmic formation and nuclear localization of the TIM-PER complex. Light induces the degradation of TIM, which promotes elimination of PER. Nuclear activity of the heterodimer coordinatively regulates PER and TIM transcription through a negative feedback loop. Behaves as a negative element in circadian transcriptional loop. Does not appear to bind DNA, suggesting indirect transcriptional inhibition. The chain is Period circadian protein (per) from Zaprionus tuberculatus (Vinegar fly).